Here is a 156-residue protein sequence, read N- to C-terminus: ATP synthase subunit b (156 aa).

The chain crosses the membrane as a helical span at residues 7–29 (LFAQMVVFLVLAWFTMKFVWPPL).

The protein belongs to the ATPase B chain family. In terms of assembly, F-type ATPases have 2 components, F(1) - the catalytic core - and F(0) - the membrane proton channel. F(1) has five subunits: alpha(3), beta(3), gamma(1), delta(1), epsilon(1). F(0) has three main subunits: a(1), b(2) and c(10-14). The alpha and beta chains form an alternating ring which encloses part of the gamma chain. F(1) is attached to F(0) by a central stalk formed by the gamma and epsilon chains, while a peripheral stalk is formed by the delta and b chains.

It localises to the cell inner membrane. F(1)F(0) ATP synthase produces ATP from ADP in the presence of a proton or sodium gradient. F-type ATPases consist of two structural domains, F(1) containing the extramembraneous catalytic core and F(0) containing the membrane proton channel, linked together by a central stalk and a peripheral stalk. During catalysis, ATP synthesis in the catalytic domain of F(1) is coupled via a rotary mechanism of the central stalk subunits to proton translocation. In terms of biological role, component of the F(0) channel, it forms part of the peripheral stalk, linking F(1) to F(0). The polypeptide is ATP synthase subunit b (Burkholderia cenocepacia (strain ATCC BAA-245 / DSM 16553 / LMG 16656 / NCTC 13227 / J2315 / CF5610) (Burkholderia cepacia (strain J2315))).